The sequence spans 166 residues: 3-isopropylmalate dehydratase small subunit (166 aa).

The protein belongs to the LeuD family. LeuD type 2 subfamily. In terms of assembly, heterodimer of LeuC and LeuD.

The enzyme catalyses (2R,3S)-3-isopropylmalate = (2S)-2-isopropylmalate. It functions in the pathway amino-acid biosynthesis; L-leucine biosynthesis; L-leucine from 3-methyl-2-oxobutanoate: step 2/4. In terms of biological role, catalyzes the isomerization between 2-isopropylmalate and 3-isopropylmalate, via the formation of 2-isopropylmaleate. The polypeptide is 3-isopropylmalate dehydratase small subunit (Heliobacterium modesticaldum (strain ATCC 51547 / Ice1)).